Consider the following 142-residue polypeptide: Nucleoside diphosphate kinase (142 aa).

ATP is bound by residues Lys11, Phe59, Arg87, Thr93, Arg104, and Asn114. Catalysis depends on His117, which acts as the Pros-phosphohistidine intermediate.

Belongs to the NDK family. As to quaternary structure, homotetramer. The cofactor is Mg(2+).

The protein resides in the cytoplasm. The enzyme catalyses a 2'-deoxyribonucleoside 5'-diphosphate + ATP = a 2'-deoxyribonucleoside 5'-triphosphate + ADP. The catalysed reaction is a ribonucleoside 5'-diphosphate + ATP = a ribonucleoside 5'-triphosphate + ADP. Major role in the synthesis of nucleoside triphosphates other than ATP. The ATP gamma phosphate is transferred to the NDP beta phosphate via a ping-pong mechanism, using a phosphorylated active-site intermediate. This is Nucleoside diphosphate kinase from Marinobacter nauticus (strain ATCC 700491 / DSM 11845 / VT8) (Marinobacter aquaeolei).